The sequence spans 85 residues: Probable weak neurotoxin 3FTx-Lio1 (85 aa).

Positions 1 to 18 (MKAVILSLVAAFLYSGYT) are cleaved as a signal peptide. Cystine bridges form between Cys-21–Cys-42, Cys-24–Cys-29, Cys-35–Cys-60, Cys-64–Cys-75, and Cys-76–Cys-81.

Belongs to the three-finger toxin family. Ancestral subfamily. As to expression, expressed by the venom gland.

Its subcellular location is the secreted. The polypeptide is Probable weak neurotoxin 3FTx-Lio1 (Erythrolamprus poecilogyrus (Water snake)).